The chain runs to 351 residues: Probable dual-specificity RNA methyltransferase RlmN (351 aa).

The active-site Proton acceptor is the Glu98. The 229-residue stretch at 104 to 332 (TQKRLTVCVS…ASIRRSRGLD (229 aa)) folds into the Radical SAM core domain. A disulfide bridge connects residues Cys111 and Cys337. [4Fe-4S] cluster is bound by residues Cys118, Cys122, and Cys125. S-adenosyl-L-methionine-binding positions include 165–166 (GE), Ser195, 218–220 (SLH), and Asn294. The active-site S-methylcysteine intermediate is the Cys337.

The protein belongs to the radical SAM superfamily. RlmN family. Requires [4Fe-4S] cluster as cofactor.

Its subcellular location is the cytoplasm. The enzyme catalyses adenosine(2503) in 23S rRNA + 2 reduced [2Fe-2S]-[ferredoxin] + 2 S-adenosyl-L-methionine = 2-methyladenosine(2503) in 23S rRNA + 5'-deoxyadenosine + L-methionine + 2 oxidized [2Fe-2S]-[ferredoxin] + S-adenosyl-L-homocysteine. It catalyses the reaction adenosine(37) in tRNA + 2 reduced [2Fe-2S]-[ferredoxin] + 2 S-adenosyl-L-methionine = 2-methyladenosine(37) in tRNA + 5'-deoxyadenosine + L-methionine + 2 oxidized [2Fe-2S]-[ferredoxin] + S-adenosyl-L-homocysteine. In terms of biological role, specifically methylates position 2 of adenine 2503 in 23S rRNA and position 2 of adenine 37 in tRNAs. The chain is Probable dual-specificity RNA methyltransferase RlmN from Acaryochloris marina (strain MBIC 11017).